The chain runs to 155 residues: SsrA-binding protein (155 aa).

It belongs to the SmpB family.

It localises to the cytoplasm. Its function is as follows. Required for rescue of stalled ribosomes mediated by trans-translation. Binds to transfer-messenger RNA (tmRNA), required for stable association of tmRNA with ribosomes. tmRNA and SmpB together mimic tRNA shape, replacing the anticodon stem-loop with SmpB. tmRNA is encoded by the ssrA gene; the 2 termini fold to resemble tRNA(Ala) and it encodes a 'tag peptide', a short internal open reading frame. During trans-translation Ala-aminoacylated tmRNA acts like a tRNA, entering the A-site of stalled ribosomes, displacing the stalled mRNA. The ribosome then switches to translate the ORF on the tmRNA; the nascent peptide is terminated with the 'tag peptide' encoded by the tmRNA and targeted for degradation. The ribosome is freed to recommence translation, which seems to be the essential function of trans-translation. This Streptococcus pneumoniae serotype 4 (strain ATCC BAA-334 / TIGR4) protein is SsrA-binding protein.